Here is a 255-residue protein sequence, read N- to C-terminus: 4-hydroxy-tetrahydrodipicolinate reductase (255 aa).

NAD(+)-binding positions include 9 to 14 (GFKGKM), 89 to 91 (GTT), and 115 to 118 (APNF). His145 acts as the Proton donor/acceptor in catalysis. His146 lines the (S)-2,3,4,5-tetrahydrodipicolinate pocket. Lys149 functions as the Proton donor in the catalytic mechanism. A (S)-2,3,4,5-tetrahydrodipicolinate-binding site is contributed by 155-156 (GT).

It belongs to the DapB family.

It is found in the cytoplasm. The enzyme catalyses (S)-2,3,4,5-tetrahydrodipicolinate + NAD(+) + H2O = (2S,4S)-4-hydroxy-2,3,4,5-tetrahydrodipicolinate + NADH + H(+). It catalyses the reaction (S)-2,3,4,5-tetrahydrodipicolinate + NADP(+) + H2O = (2S,4S)-4-hydroxy-2,3,4,5-tetrahydrodipicolinate + NADPH + H(+). The protein operates within amino-acid biosynthesis; L-lysine biosynthesis via DAP pathway; (S)-tetrahydrodipicolinate from L-aspartate: step 4/4. Functionally, catalyzes the conversion of 4-hydroxy-tetrahydrodipicolinate (HTPA) to tetrahydrodipicolinate. The polypeptide is 4-hydroxy-tetrahydrodipicolinate reductase (Streptococcus sanguinis (strain SK36)).